Reading from the N-terminus, the 1276-residue chain is cGMP-specific 3',5'-cyclic phosphodiesterase (1276 aa).

Disordered stretches follow at residues 1-76 (MHEL…TAAG), 91-185 (NQVK…QQDV), and 241-260 (ASPT…SASS). 2 stretches are compositionally biased toward low complexity: residues 12-47 (SSSS…SSAS) and 57-76 (TSTA…TAAG). Residues 109-124 (APYPPVPAAKPKPTPT) are compositionally biased toward pro residues. Residues 129–140 (SKFKSTSREVDV) are compositionally biased toward basic and acidic residues. Positions 147–166 (ARSSTISPGVSIHTQTIQQE) are enriched in polar residues. Low complexity-rich tracts occupy residues 167 to 180 (SSSA…SSSS) and 249 to 260 (SPRSLSNSSASS). GAF domains are found at residues 290 to 442 (DIDV…GIGI) and 474 to 658 (NLEC…GLGI). The PDEase domain occupies 688–1119 (SQDQTEKLTQ…RNWQDLAEKV (432 aa)). Histidine 764 (proton donor) is an active-site residue. Residues histidine 768, histidine 804, aspartate 805, and aspartate 1023 each coordinate a divalent metal cation. Disordered stretches follow at residues 1162–1193 (AQHG…TGAL) and 1205–1276 (LYNS…CSLL). 2 stretches are compositionally biased toward basic and acidic residues: residues 1171-1180 (DDSHTPEHQR) and 1221-1233 (LESH…DDKS). Positions 1248–1263 (GRMSASSSTSSAGTVV) are enriched in low complexity. Residues 1266–1276 (SKKRSKLCSLL) show a composition bias toward basic residues. Cysteine 1273 bears the Cysteine methyl ester mark. Cysteine 1273 carries the S-farnesyl cysteine lipid modification. Residues 1274-1276 (SLL) constitute a propeptide, removed in mature form.

It belongs to the cyclic nucleotide phosphodiesterase family. As to quaternary structure, interacts with PrBP. A divalent metal cation serves as cofactor.

The protein localises to the cell membrane. It catalyses the reaction 3',5'-cyclic GMP + H2O = GMP + H(+). Its function is as follows. Has a role regulating cGMP transport in Malpighian tubule principal cells. This Drosophila persimilis (Fruit fly) protein is cGMP-specific 3',5'-cyclic phosphodiesterase.